The primary structure comprises 386 residues: L-lactate dehydrogenase (386 aa).

The region spanning Met1–Arg380 is the FMN hydroxy acid dehydrogenase domain. Tyr24 lines the substrate pocket. Positions 106 and 127 each coordinate FMN. Tyr129 serves as a coordination point for substrate. FMN is bound at residue Thr155. Substrate is bound at residue Arg164. Lys251 provides a ligand contact to FMN. His275 serves as the catalytic Proton acceptor. Arg278 is a binding site for substrate. Asp306–Arg330 provides a ligand contact to FMN.

It belongs to the FMN-dependent alpha-hydroxy acid dehydrogenase family. FMN is required as a cofactor.

Its subcellular location is the cell inner membrane. The enzyme catalyses (S)-lactate + A = pyruvate + AH2. Catalyzes the conversion of L-lactate to pyruvate. Is coupled to the respiratory chain. In Xanthomonas campestris pv. campestris (strain B100), this protein is L-lactate dehydrogenase.